Consider the following 144-residue polypeptide: Transcriptional regulator SlyA (144 aa).

The HTH marR-type domain occupies 2–135 (ESPLGSDLAR…LLHLIRKLEQ (134 aa)). Positions 49-72 (QIQLAKAIGIEQPSLVRTLDQLEE) form a DNA-binding region, H-T-H motif.

The protein belongs to the SlyA family. As to quaternary structure, homodimer.

Functionally, transcription regulator that can specifically activate or repress expression of target genes. In Klebsiella pneumoniae (strain 342), this protein is Transcriptional regulator SlyA.